A 158-amino-acid chain; its full sequence is Troponin C, isoform 1 (158 aa).

The residue at position 1 (serine 1) is an N-acetylserine. EF-hand domains are found at residues glutamate 15–lysine 50, valine 51–glutamate 86, alanine 91–arginine 126, and leucine 127–glycine 158. Ca(2+) is bound by residues aspartate 64, aspartate 66, serine 68, glutamine 70, and glutamate 75. The Ca(2+) site is built by aspartate 140, aspartate 142, serine 144, threonine 146, and glutamate 151.

This sequence belongs to the troponin C family.

Its function is as follows. Troponin is the central regulatory protein of striated muscle contraction. Tn consists of three components: Tn-I which is the inhibitor of actomyosin ATPase, Tn-T which contains the binding site for tropomyosin and Tn-C. The binding of calcium to Tn-C abolishes the inhibitory action of Tn on actin filaments. This chain is Troponin C, isoform 1, found in Balanus nubilus (Giant acorn barnacle).